A 204-amino-acid chain; its full sequence is Ribosome maturation factor RimP (204 aa).

The disordered stretch occupies residues 176 to 204 (GNFDESQFDEIEESEGEEADEAEQPPTKH). The segment covering 181–198 (SQFDEIEESEGEEADEAE) has biased composition (acidic residues).

It belongs to the RimP family.

The protein resides in the cytoplasm. In terms of biological role, required for maturation of 30S ribosomal subunits. The chain is Ribosome maturation factor RimP from Cereibacter sphaeroides (strain KD131 / KCTC 12085) (Rhodobacter sphaeroides).